A 402-amino-acid polypeptide reads, in one-letter code: Enoyl-[acyl-carrier-protein] reductase [NADH] (402 aa).

Residues 48–53, 74–75, 111–112, and 140–141 contribute to the NAD(+) site; these read GASSGY, FE, DA, and LA. Tyrosine 226 lines the substrate pocket. Tyrosine 236 acts as the Proton donor in catalysis. Residues lysine 245 and 274-276 each bind NAD(+); that span reads VVT.

It belongs to the TER reductase family. As to quaternary structure, monomer.

The enzyme catalyses a 2,3-saturated acyl-[ACP] + NAD(+) = a (2E)-enoyl-[ACP] + NADH + H(+). It functions in the pathway lipid metabolism; fatty acid biosynthesis. Functionally, involved in the final reduction of the elongation cycle of fatty acid synthesis (FAS II). Catalyzes the reduction of a carbon-carbon double bond in an enoyl moiety that is covalently linked to an acyl carrier protein (ACP). The protein is Enoyl-[acyl-carrier-protein] reductase [NADH] of Xanthomonas campestris pv. campestris (strain 8004).